The sequence spans 178 residues: Histone H3-like centromeric protein CENH3 (178 aa).

Residues 1–81 (MARTKHRVTR…GSQKKSYRYR (81 aa)) form a disordered region. K5 carries the N6,N6,N6-trimethyllysine; alternate modification. N6,N6-dimethyllysine; alternate is present on K5. N6-methyllysine; alternate is present on K5. The residue at position 11 (S11) is a Phosphoserine. A compositionally biased stretch (low complexity) spans 16–36 (QTDAAGASSSQAAGPTTTPTR). Residues 43–56 (DNTQQTNPTTSPAT) are compositionally biased toward polar residues. N6-methyllysine; alternate is present on residues K63 and K75. K63 carries the post-translational modification N6-acetyllysine; alternate. The residue at position 75 (K75) is an N6,N6,N6-trimethyllysine; alternate. At K75 the chain carries N6,N6-dimethyllysine; alternate.

It belongs to the histone H3 family. As to quaternary structure, forms a nucleosome-like histone octamer containing two molecules each of H2A, H2B, CENH3 and H4 assembled in one CENH3-H4 heterotetramer and two H2A-H2B heterodimers. Interacts with ORTH2.

It localises to the chromosome. Its subcellular location is the centromere. The protein resides in the kinetochore. Histone H3-like variant which exclusively replaces conventional H3 in the nucleosome core of centromeric chromatin at the inner plate of the kinetochore. Required for recruitment and assembly of kinetochore proteins, mitotic progression and chromosome segregation. May serve as an epigenetic mark that propagates centromere identity through replication and cell division. This chain is Histone H3-like centromeric protein CENH3, found in Arabidopsis thaliana (Mouse-ear cress).